A 395-amino-acid chain; its full sequence is Probable beta-1,3-galactosyltransferase 8 (395 aa).

A helical; Signal-anchor for type II membrane protein transmembrane segment spans residues Ala-5–Ser-27. A glycan (N-linked (GlcNAc...) asparagine) is linked at Asn-117.

It belongs to the glycosyltransferase 31 family. Requires Mn(2+) as cofactor.

Its subcellular location is the golgi apparatus membrane. The protein operates within protein modification; protein glycosylation. Beta-1,3-galactosyltransferase that transfers galactose from UDP-galactose to substrates with a terminal glycosyl residue. This is Probable beta-1,3-galactosyltransferase 8 (B3GALT8) from Arabidopsis thaliana (Mouse-ear cress).